A 311-amino-acid polypeptide reads, in one-letter code: Olfactory receptor 1D4 (311 aa).

Residues Met-1–Gln-25 lie on the Extracellular side of the membrane. The N-linked (GlcNAc...) asparagine glycan is linked to Asn-5. A helical transmembrane segment spans residues Ile-26 to Ile-49. At Ser-50–Thr-57 the chain is on the cytoplasmic side. The chain crosses the membrane as a helical span at residues Pro-58 to Pro-79. The Extracellular segment spans residues Lys-80–Gln-100. A disulfide bridge links Cys-97 with Cys-189. Residues Leu-101–Tyr-120 form a helical membrane-spanning segment. The Cytoplasmic segment spans residues Asp-121–Leu-140. The helical transmembrane segment at Cys-141–Leu-158 threads the bilayer. Residues Leu-159 to His-196 are Extracellular-facing. A helical transmembrane segment spans residues Thr-197–Arg-220. The Cytoplasmic portion of the chain corresponds to Ile-221–Thr-237. Residues Phe-238 to Leu-260 form a helical membrane-spanning segment. Over Gln-261–Ser-271 the chain is Extracellular. A helical membrane pass occupies residues Val-272–Leu-291. At Arg-292 to Pro-311 the chain is on the cytoplasmic side.

Belongs to the G-protein coupled receptor 1 family.

The protein localises to the cell membrane. Its function is as follows. Odorant receptor. The polypeptide is Olfactory receptor 1D4 (OR1D4) (Homo sapiens (Human)).